Reading from the N-terminus, the 218-residue chain is Large ribosomal subunit protein bL25 (218 aa).

Residues 185-218 (ARAAEEEAPAAEETTAEPELVRERREPRAEEEEE) form a disordered region. Residues 190 to 200 (EEAPAAEETTA) show a composition bias toward acidic residues. Residues 203-212 (ELVRERREPR) show a composition bias toward basic and acidic residues.

It belongs to the bacterial ribosomal protein bL25 family. CTC subfamily. In terms of assembly, part of the 50S ribosomal subunit; part of the 5S rRNA/L5/L18/L25 subcomplex. Contacts the 5S rRNA. Binds to the 5S rRNA independently of L5 and L18.

Functionally, this is one of the proteins that binds to the 5S RNA in the ribosome where it forms part of the central protuberance. In Roseiflexus castenholzii (strain DSM 13941 / HLO8), this protein is Large ribosomal subunit protein bL25.